The primary structure comprises 411 residues: Protein PHLOEM PROTEIN 2-LIKE A5 (411 aa).

Residues 20–157 (TGPQVFINFR…KWTEALFSVC (138 aa)) form the TIR domain. Residue E94 is part of the active site.

The enzyme catalyses NAD(+) + H2O = ADP-D-ribose + nicotinamide + H(+). The sequence is that of Protein PHLOEM PROTEIN 2-LIKE A5 (PP2A5) from Arabidopsis thaliana (Mouse-ear cress).